The following is a 203-amino-acid chain: Large ribosomal subunit protein uL22 (203 aa).

Composition is skewed to polar residues over residues Q116 to Y126 and V134 to L167. Positions Q116–K203 are disordered. Residues S168 to T194 are compositionally biased toward low complexity.

Belongs to the universal ribosomal protein uL22 family. As to quaternary structure, part of the 50S ribosomal subunit.

Functionally, this protein binds specifically to 23S rRNA; its binding is stimulated by other ribosomal proteins, e.g. L4, L17, and L20. It is important during the early stages of 50S assembly. It makes multiple contacts with different domains of the 23S rRNA in the assembled 50S subunit and ribosome. Its function is as follows. The globular domain of the protein is located near the polypeptide exit tunnel on the outside of the subunit, while an extended beta-hairpin is found that lines the wall of the exit tunnel in the center of the 70S ribosome. The protein is Large ribosomal subunit protein uL22 of Mesomycoplasma hyopneumoniae (strain 232) (Mycoplasma hyopneumoniae).